Reading from the N-terminus, the 262-residue chain is Trypsin eta (262 aa).

The N-terminal stretch at 1 to 22 (MNKVILRILAVLFLLGIYAVSA) is a signal peptide. The propeptide at 23 to 27 (QSDGR) is activation peptide. One can recognise a Peptidase S1 domain in the interval 28 to 259 (IVGGADTSSY…YKDWIAKQRT (232 aa)). Cys59 and Cys75 are disulfide-bonded. Residues His74 and Asp120 each act as charge relay system in the active site. Intrachain disulfides connect Cys185-Cys200 and Cys211-Cys235. Catalysis depends on Ser215, which acts as the Charge relay system.

This sequence belongs to the peptidase S1 family.

It localises to the secreted. The protein resides in the extracellular space. The catalysed reaction is Preferential cleavage: Arg-|-Xaa, Lys-|-Xaa.. This chain is Trypsin eta (etaTry), found in Drosophila melanogaster (Fruit fly).